We begin with the raw amino-acid sequence, 193 residues long: MPIDKIITQINETAQLERASFEEMKRKEIDQKFEVKKWQIEADFQKEKASKLEEIERSYRQLRNKQKMQVKQEILNAKQEVLQRLFTEATLQLENEPKEEQLALMKQMIQTLPINGTARLIPGEKSADILTPAVIAEWNEELPFELIREDFTEKAQAGLIIDDAGIQYNFLFSHLIKEIQETMSAEIAKELFD.

Belongs to the V-ATPase E subunit family. Post-translationally, the N-terminus is blocked.

Functionally, involved in ATP-driven sodium extrusion. In Enterococcus hirae (strain ATCC 9790 / DSM 20160 / JCM 8729 / LMG 6399 / NBRC 3181 / NCIMB 6459 / NCDO 1258 / NCTC 12367 / WDCM 00089 / R), this protein is V-type sodium ATPase subunit E (ntpE).